The following is an 822-amino-acid chain: Molybdenum cofactor sulfurase (822 aa).

At lysine 245 the chain carries N6-(pyridoxal phosphate)lysine. Residue cysteine 412 is part of the active site. Positions 658–814 constitute an MOSC domain; that stretch reads LRLIRQSSND…LKTYSPIKAI (157 aa).

It belongs to the class-V pyridoxal-phosphate-dependent aminotransferase family. MOCOS subfamily. Pyridoxal 5'-phosphate is required as a cofactor.

It carries out the reaction Mo-molybdopterin + L-cysteine + AH2 = thio-Mo-molybdopterin + L-alanine + A + H2O. The protein operates within cofactor biosynthesis; molybdopterin biosynthesis. Sulfurates the molybdenum cofactor. Sulfation of molybdenum is essential for xanthine dehydrogenase (XDH) and aldehyde oxidase (ADO) enzymes in which molybdenum cofactor is liganded by 1 oxygen and 1 sulfur atom in active form. The sequence is that of Molybdenum cofactor sulfurase from Bombyx mori (Silk moth).